The sequence spans 305 residues: Small ribosomal subunit biogenesis GTPase RsgA (305 aa).

The 158-residue stretch at 67-224 (SSELVRPAVA…VADTPGFSSF (158 aa)) folds into the CP-type G domain. GTP is bound by residues 116–119 (NKID) and 166–174 (GQSGVGKST). 4 residues coordinate Zn(2+): Cys248, Cys253, His255, and Cys261.

This sequence belongs to the TRAFAC class YlqF/YawG GTPase family. RsgA subfamily. As to quaternary structure, monomer. Associates with 30S ribosomal subunit, binds 16S rRNA. It depends on Zn(2+) as a cofactor.

It is found in the cytoplasm. In terms of biological role, one of several proteins that assist in the late maturation steps of the functional core of the 30S ribosomal subunit. Helps release RbfA from mature subunits. May play a role in the assembly of ribosomal proteins into the subunit. Circularly permuted GTPase that catalyzes slow GTP hydrolysis, GTPase activity is stimulated by the 30S ribosomal subunit. The protein is Small ribosomal subunit biogenesis GTPase RsgA of Ruminiclostridium cellulolyticum (strain ATCC 35319 / DSM 5812 / JCM 6584 / H10) (Clostridium cellulolyticum).